The sequence spans 132 residues: MARVTVEDCIDKVDNRFELVLLAGHRARQISQGAQITVDRDNDKNPVVALREIAEETLSPADLKEDLIHSLQKHVEVDEPEMASEFISHSSEAGGVLGTSSEEEGSSFDHMSEEELLAGIEGLVVPEKSDDY.

The segment at 90–109 (SSEAGGVLGTSSEEEGSSFD) is disordered.

The protein belongs to the RNA polymerase subunit omega family. The RNAP catalytic core consists of 2 alpha, 1 beta, 1 beta' and 1 omega subunit. When a sigma factor is associated with the core the holoenzyme is formed, which can initiate transcription.

It carries out the reaction RNA(n) + a ribonucleoside 5'-triphosphate = RNA(n+1) + diphosphate. Functionally, promotes RNA polymerase assembly. Latches the N- and C-terminal regions of the beta' subunit thereby facilitating its interaction with the beta and alpha subunits. This is DNA-directed RNA polymerase subunit omega from Bartonella henselae (strain ATCC 49882 / DSM 28221 / CCUG 30454 / Houston 1) (Rochalimaea henselae).